Consider the following 88-residue polypeptide: Large ribosomal subunit protein bL27 (88 aa).

The segment at 1-21 (MAHKKGTGSTRNGRDSRAQRL) is disordered.

Belongs to the bacterial ribosomal protein bL27 family.

The sequence is that of Large ribosomal subunit protein bL27 from Picosynechococcus sp. (strain ATCC 27264 / PCC 7002 / PR-6) (Agmenellum quadruplicatum).